The chain runs to 160 residues: Peptide methionine sulfoxide reductase MsrA (160 aa).

Residue Cys-11 is part of the active site.

Belongs to the MsrA Met sulfoxide reductase family.

The catalysed reaction is L-methionyl-[protein] + [thioredoxin]-disulfide + H2O = L-methionyl-(S)-S-oxide-[protein] + [thioredoxin]-dithiol. It carries out the reaction [thioredoxin]-disulfide + L-methionine + H2O = L-methionine (S)-S-oxide + [thioredoxin]-dithiol. In terms of biological role, has an important function as a repair enzyme for proteins that have been inactivated by oxidation. Catalyzes the reversible oxidation-reduction of methionine sulfoxide in proteins to methionine. This is Peptide methionine sulfoxide reductase MsrA from Malacoplasma penetrans (strain HF-2) (Mycoplasma penetrans).